We begin with the raw amino-acid sequence, 582 residues long: 5-aminolevulinate synthase, erythroid-specific, mitochondrial (582 aa).

Residues 1 to 44 constitute a mitochondrion transit peptide; the sequence is MLLQRCPVLIRSPTAILGKMIKTHQFLIGIGRCPILATQGTTCS. Arg158 contributes to the succinyl-CoA binding site. Pyridoxal 5'-phosphate-binding residues include Cys253 and Phe254. Residues Ser275 and Lys294 each coordinate succinyl-CoA. Pyridoxal 5'-phosphate contacts are provided by Ser327, His355, and Thr383. The active site involves Lys386. Lys386 carries the post-translational modification N6-(pyridoxal phosphate)lysine. Residues Thr415 and Thr416 each contribute to the pyridoxal 5'-phosphate site. A succinyl-CoA-binding site is contributed by Thr503.

Belongs to the class-II pyridoxal-phosphate-dependent aminotransferase family. In terms of assembly, homodimer. Requires pyridoxal 5'-phosphate as cofactor.

It localises to the mitochondrion inner membrane. The catalysed reaction is succinyl-CoA + glycine + H(+) = 5-aminolevulinate + CO2 + CoA. Its pathway is porphyrin-containing compound metabolism; protoporphyrin-IX biosynthesis; 5-aminolevulinate from glycine: step 1/1. Functionally, catalyzes the pyridoxal 5'-phosphate (PLP)-dependent condensation of succinyl-CoA and glycine to form aminolevulinic acid (ALA), with CoA and CO2 as by-products. Contributes significantly to heme formation during erythropoiesis. The polypeptide is 5-aminolevulinate synthase, erythroid-specific, mitochondrial (ALAS2) (Delphinapterus leucas (Beluga whale)).